The chain runs to 141 residues: Putative pre-16S rRNA nuclease (141 aa).

This sequence belongs to the YqgF nuclease family.

It localises to the cytoplasm. In terms of biological role, could be a nuclease involved in processing of the 5'-end of pre-16S rRNA. In Desulforudis audaxviator (strain MP104C), this protein is Putative pre-16S rRNA nuclease.